The sequence spans 601 residues: Alpha-terpineol synthase, chloroplastic (601 aa).

The transit peptide at 1-47 directs the protein to the chloroplast; sequence MSTISIHHVGILRNPLHSKSKRASINKPWSLSLPRSSSASRLVEPCR. D357 and D361 together coordinate Mn(2+). The short motif at 357 to 361 is the DDXXD motif element; that stretch reads DDVYD. Homodimerization regions lie at residues 363 to 369 and 435 to 471; these read YGTLDEL and EAEW…ELSL. Mn(2+) is bound by residues D499 and E507.

The protein belongs to the terpene synthase family. Homodimer. Requires Mn(2+) as cofactor. It depends on Mg(2+) as a cofactor.

The protein localises to the plastid. Its subcellular location is the chloroplast. It carries out the reaction (2E)-geranyl diphosphate + H2O = (S)-alpha-terpineol + diphosphate. The enzyme catalyses (2E)-geranyl diphosphate + H2O = (R)-alpha-terpineol + diphosphate. Its pathway is secondary metabolite biosynthesis; terpenoid biosynthesis. Functionally, involved in the biosynthesis of phenolic monoterpenes natural products. Monoterpene synthase which catalyzes the conversion of geranyl diphosphate (GPP) to alpha-terpineol (isomer is not determined). The sequence is that of Alpha-terpineol synthase, chloroplastic from Thymus caespititius (Cretan thyme).